We begin with the raw amino-acid sequence, 284 residues long: Protease HtpX homolog (284 aa).

The next 2 membrane-spanning stretches (helical) occupy residues 7–26 (TYLL…MMLH) and 33–47 (IILA…YYMS). His-129 provides a ligand contact to Zn(2+). The active site involves Glu-130. His-133 provides a ligand contact to Zn(2+). 2 consecutive transmembrane segments (helical) span residues 148-168 (LAGA…IFFV) and 180-200 (IGTI…QFAI). Residue Glu-205 coordinates Zn(2+).

The protein belongs to the peptidase M48B family. Zn(2+) is required as a cofactor.

The protein resides in the cell membrane. The polypeptide is Protease HtpX homolog (Methanocaldococcus jannaschii (strain ATCC 43067 / DSM 2661 / JAL-1 / JCM 10045 / NBRC 100440) (Methanococcus jannaschii)).